The sequence spans 540 residues: Coatomer subunit delta (540 aa).

The tract at residues 169–263 (RHEEMLRGKR…GMILGGKSGT (95 aa)) is disordered. A compositionally biased stretch (gly residues) spans 179-197 (SGGYTGISGGGGMGSGGMG). Residues 212–229 (NNNNNNNNNNNNNNNNNN) show a composition bias toward low complexity. The span at 238–250 (SPNTSRPSAASSG) shows a compositional bias: polar residues. Residues 251 to 261 (SQGGMILGGKS) show a composition bias toward gly residues. An MHD domain is found at 304 to 540 (QEGVHITVEE…TLSVDTYEIK (237 aa)).

Belongs to the adaptor complexes medium subunit family. Delta-COP subfamily. As to quaternary structure, oligomeric complex that consists of at least the alpha, beta, beta', gamma, delta, epsilon and zeta subunits.

It is found in the cytoplasm. The protein localises to the golgi apparatus membrane. Its subcellular location is the cytoplasmic vesicle. The protein resides in the COPI-coated vesicle membrane. Functionally, the coatomer is a cytosolic protein complex that binds to dilysine motifs and reversibly associates with Golgi non-clathrin-coated vesicles, which further mediate biosynthetic protein transport from the ER, via the Golgi up to the trans Golgi network. Coatomer complex is required for budding from Golgi membranes, and is essential for the retrograde Golgi-to-ER transport of dilysine-tagged proteins. The sequence is that of Coatomer subunit delta (copd) from Dictyostelium discoideum (Social amoeba).